Reading from the N-terminus, the 308-residue chain is tRNA pseudouridine synthase B (308 aa).

Asp37 serves as the catalytic Nucleophile.

It belongs to the pseudouridine synthase TruB family. Type 1 subfamily.

The catalysed reaction is uridine(55) in tRNA = pseudouridine(55) in tRNA. In terms of biological role, responsible for synthesis of pseudouridine from uracil-55 in the psi GC loop of transfer RNAs. This is tRNA pseudouridine synthase B from Deinococcus radiodurans (strain ATCC 13939 / DSM 20539 / JCM 16871 / CCUG 27074 / LMG 4051 / NBRC 15346 / NCIMB 9279 / VKM B-1422 / R1).